The chain runs to 582 residues: ATP-dependent lipid A-core flippase (582 aa).

5 helical membrane-spanning segments follow: residues 16–36 (LWPTIAPFKAGLIVAGIALIL), 64–84 (LLWMPLVVIGLMILRGITSYI), 153–173 (IIGLFIMMFYYSWQLSIILVV), 253–273 (PIIQLIASLALAFVLYAASFP), and 275–295 (VMDSLTAGTITVVFSSMIALM). The ABC transmembrane type-1 domain maps to 28–310 (IVAGIALILN…LTNVNAQFQR (283 aa)). Residues 342–578 (LEFRNVTFTY…HGVYAQLHKM (237 aa)) enclose the ABC transporter domain. ATP is bound at residue 376–383 (GRSGSGKS).

It belongs to the ABC transporter superfamily. Lipid exporter (TC 3.A.1.106) family. In terms of assembly, homodimer.

Its subcellular location is the cell inner membrane. It catalyses the reaction ATP + H2O + lipid A-core oligosaccharideSide 1 = ADP + phosphate + lipid A-core oligosaccharideSide 2.. In terms of biological role, involved in lipopolysaccharide (LPS) biosynthesis. Translocates lipid A-core from the inner to the outer leaflet of the inner membrane. Transmembrane domains (TMD) form a pore in the inner membrane and the ATP-binding domain (NBD) is responsible for energy generation. In Salmonella paratyphi A (strain ATCC 9150 / SARB42), this protein is ATP-dependent lipid A-core flippase.